A 147-amino-acid chain; its full sequence is MKLHEIAPQPGSTKRRRRVGRGVSAGQGASCGLGMRGQKSRSGTGTRPGFEGGQMPLYRRVPKLKHFPLVNPRQYTIVNLRKLASLPANTEVTLESLLKAKILTSNDGPLKVLGDGEITVPLKVKAAAFSNSAKEKITAAQGTWEEI.

Positions 1–55 (MKLHEIAPQPGSTKRRRRVGRGVSAGQGASCGLGMRGQKSRSGTGTRPGFEGGQM) are disordered. Positions 23–35 (VSAGQGASCGLGM) are enriched in gly residues.

This sequence belongs to the universal ribosomal protein uL15 family. As to quaternary structure, part of the 50S ribosomal subunit.

Its function is as follows. Binds to the 23S rRNA. The protein is Large ribosomal subunit protein uL15 of Microcystis aeruginosa (strain NIES-843 / IAM M-2473).